The following is a 314-amino-acid chain: DNA-directed RNA polymerase subunit alpha (314 aa).

An alpha N-terminal domain (alpha-NTD) region spans residues 1-227 (MTKFEIECVE…ELLHPLKEIN (227 aa)). Residues 241–314 (KINQILIEEL…LPKEKTVKPN (74 aa)) are alpha C-terminal domain (alpha-CTD).

The protein belongs to the RNA polymerase alpha chain family. In terms of assembly, in plastids the minimal PEP RNA polymerase catalytic core is composed of four subunits: alpha, beta, beta', and beta''. When a (nuclear-encoded) sigma factor is associated with the core the holoenzyme is formed, which can initiate transcription.

Its subcellular location is the plastid. The protein resides in the chloroplast. The catalysed reaction is RNA(n) + a ribonucleoside 5'-triphosphate = RNA(n+1) + diphosphate. Its function is as follows. DNA-dependent RNA polymerase catalyzes the transcription of DNA into RNA using the four ribonucleoside triphosphates as substrates. The polypeptide is DNA-directed RNA polymerase subunit alpha (Rhodomonas salina (Cryptomonas salina)).